A 242-amino-acid polypeptide reads, in one-letter code: MKLFVYHTPEATPTDQLPDCAVVIDVLRATTTIATALHAGAEAVQTFADLDELFQFSETWQQTPFLRAGERGGQQVEGCELGNSPRSCTPEMVAGKRLFLTTTNGTRALKRVEQAPTVITAAQVNRQSVVKFLQTEQPDTVWFVGSGWQGDYSLEDTVCAGAIAKSLWNGDSDQLGNDEVIGAISLYQQWQQDLFGLFKLASHGQRLLRLDNEIDIRYCAQSDTLAVLPIQTEPGVLKAYRH.

This sequence belongs to the ComB family. Mg(2+) is required as a cofactor.

The catalysed reaction is (2R)-O-phospho-3-sulfolactate + H2O = (2R)-3-sulfolactate + phosphate. The polypeptide is Probable 2-phosphosulfolactate phosphatase (Picosynechococcus sp. (strain ATCC 27264 / PCC 7002 / PR-6) (Agmenellum quadruplicatum)).